A 445-amino-acid polypeptide reads, in one-letter code: Probable histidine--tRNA ligase, cytoplasmic (445 aa).

The protein belongs to the class-II aminoacyl-tRNA synthetase family.

It is found in the cytoplasm. It catalyses the reaction tRNA(His) + L-histidine + ATP = L-histidyl-tRNA(His) + AMP + diphosphate + H(+). This chain is Probable histidine--tRNA ligase, cytoplasmic, found in Antonospora locustae (Microsporidian parasite).